A 580-amino-acid chain; its full sequence is Arginine--tRNA ligase (580 aa).

The 'HIGH' region signature appears at 127-137 (PNTHKELHVGH).

It belongs to the class-I aminoacyl-tRNA synthetase family. Monomer.

The protein resides in the cytoplasm. The catalysed reaction is tRNA(Arg) + L-arginine + ATP = L-arginyl-tRNA(Arg) + AMP + diphosphate. The chain is Arginine--tRNA ligase from Bdellovibrio bacteriovorus (strain ATCC 15356 / DSM 50701 / NCIMB 9529 / HD100).